The primary structure comprises 693 residues: Ion-translocating oxidoreductase complex subunit C (693 aa).

4Fe-4S ferredoxin-type domains are found at residues 368–397 and 407–436; these read MEPVAEEQSCIRCSKCADACPAGLLPQQLY and KARDHHLFDCIECGACAYVCPSNIPLVQYY. [4Fe-4S] cluster is bound by residues Cys377, Cys380, Cys383, Cys387, Cys416, Cys419, Cys422, and Cys426. Residues 539–548 show a composition bias toward basic and acidic residues; it reads REERVREKQS. The segment at 539-564 is disordered; the sequence is REERVREKQSQQETPATEVTPEELDP.

The protein belongs to the 4Fe4S bacterial-type ferredoxin family. RnfC subfamily. As to quaternary structure, the complex is composed of six subunits: RnfA, RnfB, RnfC, RnfD, RnfE and RnfG. [4Fe-4S] cluster serves as cofactor.

Its subcellular location is the cell inner membrane. Its function is as follows. Part of a membrane-bound complex that couples electron transfer with translocation of ions across the membrane. The sequence is that of Ion-translocating oxidoreductase complex subunit C from Pectobacterium atrosepticum (strain SCRI 1043 / ATCC BAA-672) (Erwinia carotovora subsp. atroseptica).